We begin with the raw amino-acid sequence, 254 residues long: 5'-nucleotidase SurE (254 aa).

A divalent metal cation-binding residues include D8, D9, S39, and N97.

This sequence belongs to the SurE nucleotidase family. A divalent metal cation is required as a cofactor.

The protein resides in the cytoplasm. The catalysed reaction is a ribonucleoside 5'-phosphate + H2O = a ribonucleoside + phosphate. In terms of biological role, nucleotidase that shows phosphatase activity on nucleoside 5'-monophosphates. This Alkaliphilus metalliredigens (strain QYMF) protein is 5'-nucleotidase SurE.